We begin with the raw amino-acid sequence, 258 residues long: UPF0246 protein LHK_02295 (258 aa).

The protein belongs to the UPF0246 family.

The chain is UPF0246 protein LHK_02295 from Laribacter hongkongensis (strain HLHK9).